A 270-amino-acid polypeptide reads, in one-letter code: Aliphatic sulfonates import ATP-binding protein SsuB (270 aa).

The 222-residue stretch at 17-238 folds into the ABC transporter domain; sequence LAANDLRRTF…VRGSHRLAAL (222 aa). ATP is bound at residue 49-56; that stretch reads GRSGCGKS. The disordered stretch occupies residues 250–270; that stretch reads PGTPPEPEPVAPLPTHLRWAH. Residues 251–261 show a composition bias toward pro residues; the sequence is GTPPEPEPVAP.

This sequence belongs to the ABC transporter superfamily. Aliphatic sulfonates importer (TC 3.A.1.17.2) family. The complex is composed of two ATP-binding proteins (SsuB), two transmembrane proteins (SsuC) and a solute-binding protein (SsuA).

It localises to the cell inner membrane. It carries out the reaction ATP + H2O + aliphatic sulfonate-[sulfonate-binding protein]Side 1 = ADP + phosphate + aliphatic sulfonateSide 2 + [sulfonate-binding protein]Side 1.. Part of the ABC transporter complex SsuABC involved in aliphatic sulfonates import. Responsible for energy coupling to the transport system. This chain is Aliphatic sulfonates import ATP-binding protein SsuB, found in Pseudomonas entomophila (strain L48).